We begin with the raw amino-acid sequence, 150 residues long: Urease accessory protein UreE (150 aa).

It belongs to the UreE family.

Its subcellular location is the cytoplasm. Functionally, involved in urease metallocenter assembly. Binds nickel. Probably functions as a nickel donor during metallocenter assembly. This chain is Urease accessory protein UreE, found in Staphylococcus aureus (strain MRSA252).